The sequence spans 45 residues: Bomanin Short 2 (45 aa).

The first 20 residues, 1 to 20 (MKFFSVVTVFVFGLLALANA), serve as a signal peptide directing secretion. Positions 21-27 (VPLSPDP) are cleaved as a propeptide — removed by a dipeptidylpeptidase. The cysteines at positions 36 and 39 are disulfide-linked. Gly43 carries the post-translational modification Glycine amide.

Hemolymph (at protein level).

The protein resides in the secreted. Functionally, secreted immune-induced peptide induced by Toll signaling. Has a role in resistance to bacterial and fungal infections. This is Bomanin Short 2 from Drosophila melanogaster (Fruit fly).